A 331-amino-acid polypeptide reads, in one-letter code: Ribose-phosphate pyrophosphokinase (331 aa).

55–57 serves as a coordination point for ATP; it reads DGE. Residues H148 and D187 each coordinate Mg(2+). K211 is an active-site residue. D-ribose 5-phosphate contacts are provided by residues R213, D237, and 241–245; that span reads DTGGT.

This sequence belongs to the ribose-phosphate pyrophosphokinase family. Class I subfamily. As to quaternary structure, homohexamer. The cofactor is Mg(2+).

It localises to the cytoplasm. It catalyses the reaction D-ribose 5-phosphate + ATP = 5-phospho-alpha-D-ribose 1-diphosphate + AMP + H(+). It functions in the pathway metabolic intermediate biosynthesis; 5-phospho-alpha-D-ribose 1-diphosphate biosynthesis; 5-phospho-alpha-D-ribose 1-diphosphate from D-ribose 5-phosphate (route I): step 1/1. In terms of biological role, involved in the biosynthesis of the central metabolite phospho-alpha-D-ribosyl-1-pyrophosphate (PRPP) via the transfer of pyrophosphoryl group from ATP to 1-hydroxyl of ribose-5-phosphate (Rib-5-P). The chain is Ribose-phosphate pyrophosphokinase from Prochlorococcus marinus subsp. pastoris (strain CCMP1986 / NIES-2087 / MED4).